The following is a 148-amino-acid chain: Ubiquitin conjugating enzyme E2 B (148 aa).

One can recognise a UBC core domain in the interval 2 to 148 (AAHKRLQKEI…AKEWTKKYAK (147 aa)). Cysteine 87 acts as the Glycyl thioester intermediate in catalysis.

Belongs to the ubiquitin-conjugating enzyme family. As to quaternary structure, interacts with mkkA (via F-box/WD40 repeat domains).

The catalysed reaction is S-ubiquitinyl-[E1 ubiquitin-activating enzyme]-L-cysteine + [E2 ubiquitin-conjugating enzyme]-L-cysteine = [E1 ubiquitin-activating enzyme]-L-cysteine + S-ubiquitinyl-[E2 ubiquitin-conjugating enzyme]-L-cysteine.. It participates in protein modification; protein ubiquitination. Its function is as follows. Involved in protein ubiquitination and degradation during development. Mediates protein ubiquitination at the mound and finger stage required for subsequent development and may be an essential component of the developmental transition between the induction of postaggregative gene expression and subsequent cell-type differentiation and morphogenesis. ubcB and ubpB differentially control ubiquitination/deubiquitination and degradation of mkkA protein in a cell-type-specific and temporally regulated manner. This chain is Ubiquitin conjugating enzyme E2 B (ubcB), found in Dictyostelium discoideum (Social amoeba).